Here is a 486-residue protein sequence, read N- to C-terminus: Betaine aldehyde dehydrogenase (486 aa).

Positions 23 and 90 each coordinate K(+). An NAD(+)-binding site is contributed by 147-149 (GAW). Lysine 159 serves as the catalytic Charge relay system. NAD(+)-binding positions include 173 to 176 (KPSE) and 226 to 229 (ESGT). Leucine 241 contacts K(+). Glutamate 247 serves as the catalytic Proton acceptor. Residues glycine 249, cysteine 281, and glutamate 382 each contribute to the NAD(+) site. Catalysis depends on cysteine 281, which acts as the Nucleophile. The residue at position 281 (cysteine 281) is a Cysteine sulfenic acid (-SOH). Positions 452 and 455 each coordinate K(+). Glutamate 459 acts as the Charge relay system in catalysis.

Belongs to the aldehyde dehydrogenase family. In terms of assembly, dimer of dimers. Requires K(+) as cofactor.

It catalyses the reaction betaine aldehyde + NAD(+) + H2O = glycine betaine + NADH + 2 H(+). Its pathway is amine and polyamine biosynthesis; betaine biosynthesis via choline pathway; betaine from betaine aldehyde: step 1/1. Functionally, involved in the biosynthesis of the osmoprotectant glycine betaine. Catalyzes the irreversible oxidation of betaine aldehyde to the corresponding acid. This chain is Betaine aldehyde dehydrogenase, found in Vibrio vulnificus (strain CMCP6).